Consider the following 151-residue polypeptide: Large ribosomal subunit protein bL17 (151 aa).

The tract at residues 118–151 (EAKQPPRKEKAKKPAPVQAEEASATPASEEKAQD) is disordered. Over residues 131–144 (PAPVQAEEASATPA) the composition is skewed to low complexity.

It belongs to the bacterial ribosomal protein bL17 family. As to quaternary structure, part of the 50S ribosomal subunit. Contacts protein L32.

The sequence is that of Large ribosomal subunit protein bL17 from Syntrophobacter fumaroxidans (strain DSM 10017 / MPOB).